Consider the following 954-residue polypeptide: SWI/SNF-related matrix-associated actin-dependent regulator of chromatin subfamily A-like protein 1 (954 aa).

2 disordered regions span residues 1-20 (MSLP…RQKA) and 27-238 (KLLA…NSQK). Position 2 is an N-acetylserine (Ser2). Residues 3 to 34 (LPLTEEQRKKIEENRQKALARRAEKLLAEQHQ) are a coiled coil. A mediates interaction with RPA2 region spans residues 5–30 (LTEEQRKKIEENRQKALARRAEKLLA). Over residues 7–20 (EEQRKKIEENRQKA) the composition is skewed to basic and acidic residues. The segment covering 72-83 (KQQNLSSSSNAD) has biased composition (polar residues). A phosphoserine mark is found at Ser112, Ser123, Ser129, and Ser151. 2 stretches are compositionally biased toward polar residues: residues 171–183 (KSSQ…SSGQ) and 197–238 (ASPS…NSQK). Ser198 is subject to Phosphoserine. 2 consecutive HARP domains span residues 226–303 (SGSS…QPLE) and 327–398 (SLSF…DPLP). Positions 445–600 (NFAIAKGGRL…YTQIIAVKPT (156 aa)) constitute a Helicase ATP-binding domain. 458-465 (DDMGLGKT) contributes to the ATP binding site. The DESH box signature appears at 549-552 (DESH). The short motif at 644 to 661 (RRLKSDVLSQLPAKQRKI) is the Nuclear localization signal element. One can recognise a Helicase C-terminal domain in the interval 716-869 (YILDLLESGR…ETNFSEMTES (154 aa)). The segment at 904–934 (ESFDPGSASGTSGSSSQNMGDTLDESSLTAS) is disordered. A compositionally biased stretch (low complexity) spans 909-919 (GSASGTSGSSS). The segment covering 920–934 (QNMGDTLDESSLTAS) has biased composition (polar residues).

It belongs to the SNF2/RAD54 helicase family. SMARCAL1 subfamily. In terms of assembly, interacts with RPA2; the interaction is direct and mediates the recruitment by the RPA complex of SMARCAL1 to sites of DNA damage. DNA damage-regulated phosphorylation by kinases that may include ATM, ATR and PRKDC. As to expression, ubiquitously expressed, with high levels in testis.

Its subcellular location is the nucleus. The enzyme catalyses ATP + H2O = ADP + phosphate + H(+). Functionally, ATP-dependent annealing helicase that binds selectively to fork DNA relative to ssDNA or dsDNA and catalyzes the rewinding of the stably unwound DNA. Rewinds single-stranded DNA bubbles that are stably bound by replication protein A (RPA). Acts throughout the genome to reanneal stably unwound DNA, performing the opposite reaction of many enzymes, such as helicases and polymerases, that unwind DNA. May play an important role in DNA damage response by acting at stalled replication forks. The polypeptide is SWI/SNF-related matrix-associated actin-dependent regulator of chromatin subfamily A-like protein 1 (Homo sapiens (Human)).